Reading from the N-terminus, the 234-residue chain is Thymidylate kinase (234 aa).

10-17 (GGEGSGKT) contacts ATP.

It belongs to the thymidylate kinase family.

The enzyme catalyses dTMP + ATP = dTDP + ADP. In terms of biological role, phosphorylation of dTMP to form dTDP in both de novo and salvage pathways of dTTP synthesis. This chain is Thymidylate kinase, found in Cyanothece sp. (strain PCC 7425 / ATCC 29141).